Here is a 327-residue protein sequence, read N- to C-terminus: MPGPTQTLSPNGENNNDIIQDNNGTIIPFRKHTVRGERSYSWGMAVNVYSTSITQETMSRHDIIAWVNDIVSLNYTKVEQLCSGAAYCQFMDMLFPGCISLKKVKFQAKLEHEYIHNFKLLQASFKRMNVDKVIPVEKLVKGRFQDNLDFIQWFKKFYDANYDGKEYDPVEARQGQDAIPPPDPGEQIFNLPKKSHHANSPTAGAAKSSPAAKPGSTPSRPSSAKRASSSGSASKSDKDLETQVIQLNEQVHSLKLALEGVEKERDFYFGKLREIELLCQEHGQENDDLVQRLMDILYASEEHEGHTEEPEAEEQAHEQQPPQQEEY.

A disordered region spans residues 1-21 (MPGPTQTLSPNGENNNDIIQD). Residue proline 2 is modified to N-acetylalanine. A Phosphoserine modification is found at serine 9. The 103-residue stretch at 57-159 (TMSRHDIIAW…FIQWFKKFYD (103 aa)) folds into the Calponin-homology (CH) domain. Residue tyrosine 167 is modified to Phosphotyrosine. Disordered regions lie at residues 171–240 (EARQ…DKDL) and 299–327 (ASEE…QEEY). A DCTN1-binding region spans residues 187–327 (QIFNLPKKSH…EQQPPQQEEY (141 aa)). Positions 200–234 (SPTAGAAKSSPAAKPGSTPSRPSSAKRASSSGSAS) are enriched in low complexity. Phosphoserine occurs at positions 219 and 236. In terms of domain architecture, EB1 C-terminal spans 236–306 (SDKDLETQVI…LYASEEHEGH (71 aa)). The APC-binding stretch occupies residues 259–302 (EGVEKERDFYFGKLREIELLCQEHGQENDDLVQRLMDILYASEE). Residues 300–317 (SEEHEGHTEEPEAEEQAH) show a composition bias toward basic and acidic residues. Over residues 318 to 327 (EQQPPQQEEY) the composition is skewed to low complexity.

Belongs to the MAPRE family. Interacts with DCTN1. Interacts with APC (via C-terminal). Interacts with monomeric and polymerized tubulin. Interacts with SLAIN1. Interacts (via the N-terminal region) with BAG1. Interacts with ASB14. Interacts with HAX1; this interaction is essential for epidermal cell migration. In terms of processing, phosphorylated at Ser-236 by CK2 leading to enhanced cell adhesion. Phosphorylated by CDK1 and AURKB during mitosis reduces the binding affinity of MAPRE2 for microtubules. Post-translationally, ubiquitinated in an ASB14-dependent manner; leading to proteasomal degradation. As to expression, expressed in different tumor cell lines. Up-regulated in activated B- and T-lymphocytes.

It is found in the cytoplasm. The protein resides in the cytoskeleton. In terms of biological role, adapter protein that is involved in microtubule polymerization, and spindle function by stabilizing microtubules and anchoring them at centrosomes. Therefore, ensures mitotic progression and genome stability. Acts as a central regulator of microtubule reorganization in apico-basal epithelial differentiation. Plays a role during oocyte meiosis by regulating microtubule dynamics. Participates in neurite growth by interacting with plexin B3/PLXNB3 and microtubule reorganization during apico-basal epithelial differentiation. Also plays an essential role for cell migration and focal adhesion dynamics. Mechanistically, recruits HAX1 to microtubules in order to regulate focal adhesion dynamics. The protein is Microtubule-associated protein RP/EB family member 2 (MAPRE2) of Homo sapiens (Human).